A 626-amino-acid polypeptide reads, in one-letter code: Chaperone protein HtpG (626 aa).

The segment at 1–339 is a; substrate-binding; that stretch reads MSQNQETRGF…SNDLPLNVSR (339 aa). The interval 340-555 is b; that stretch reads EILQDNKITA…NDQMTTQMAK (216 aa). The c stretch occupies residues 556–626; the sequence is LFAAAGQPVP…FIKRINKLLG (71 aa).

This sequence belongs to the heat shock protein 90 family. As to quaternary structure, homodimer.

The protein resides in the cytoplasm. Molecular chaperone. Has ATPase activity. The chain is Chaperone protein HtpG from Haemophilus influenzae (strain 86-028NP).